Here is a 995-residue protein sequence, read N- to C-terminus: DExH-box ATP-dependent RNA helicase DExH1 (995 aa).

2 disordered regions span residues 1-42 and 156-192; these read MPPH…EQRW and KTTQ…ASKL. Residues 25–37 show a composition bias toward gly residues; sequence RGGGGRGGGGGGR. The segment covering 161-170 has biased composition (low complexity); that stretch reads SGSSGASASA. Residues 171–181 are compositionally biased toward polar residues; the sequence is FNDQQDRTSTL. A Helicase ATP-binding domain is found at 238 to 405; the sequence is LNSVSQNQVL…FGNSPTMHIP (168 aa). 251–258 serves as a coordination point for ATP; that stretch reads GETGCGKT. The DEIH box signature appears at 352-355; it reads DEIH. A disordered region spans residues 429–450; that stretch reads SSDSGNYQGSSRGRRRESESKK. The 180-residue stretch at 484 to 663 folds into the Helicase C-terminal domain; sequence QIDVDLVEAT…ELCLHIKSLQ (180 aa).

Belongs to the DExH box helicase family.

It carries out the reaction ATP + H2O = ADP + phosphate + H(+). The chain is DExH-box ATP-dependent RNA helicase DExH1 from Arabidopsis thaliana (Mouse-ear cress).